A 103-amino-acid polypeptide reads, in one-letter code: uncharacterized protein (103 aa).

Disordered stretches follow at residues 1–20 (MIEL…WPKG) and 44–71 (LERM…HHLG). Positions 1–34 (MIELSYAPDVAGRRSNWPKGSGVNTWTAIRWTFA) are cleaved as a signal peptide.

This is an uncharacterized protein from Mycobacterium tuberculosis (strain CDC 1551 / Oshkosh).